We begin with the raw amino-acid sequence, 161 residues long: Transcriptional repressor NrdR (161 aa).

A zinc finger lies at 3–34; the sequence is CPFCGKYDTKVTDSRLVAEGDQVRRRRQCNDC. One can recognise an ATP-cone domain in the interval 49–139; sequence PRVIKGDGSR…VYRRFQDLDE (91 aa).

The protein belongs to the NrdR family. The cofactor is Zn(2+).

Its function is as follows. Negatively regulates transcription of bacterial ribonucleotide reductase nrd genes and operons by binding to NrdR-boxes. This chain is Transcriptional repressor NrdR, found in Chromohalobacter salexigens (strain ATCC BAA-138 / DSM 3043 / CIP 106854 / NCIMB 13768 / 1H11).